Here is a 512-residue protein sequence, read N- to C-terminus: Matrix metalloproteinase-27 (512 aa).

Residues 1-17 (MKSFLLLFLLFVTFSSA) form the signal peptide. Residues 18–98 (LPADQKMENE…PRCGVPDVGQ (81 aa)) constitute a propeptide, activation peptide. The Cysteine switch signature appears at 89 to 96 (PRCGVPDV). Residue C91 participates in Zn(2+) binding. A glycan (N-linked (GlcNAc...) asparagine) is linked at N110. Residues D121 and D155 each coordinate Ca(2+). H165 lines the Zn(2+) pocket. Ca(2+) is bound by residues D173, G174, and V178. A Zn(2+)-binding site is contributed by H181. Ca(2+) contacts are provided by G188 and D192. H194 provides a ligand contact to Zn(2+). Positions 196 and 199 each coordinate Ca(2+). Residue H216 participates in Zn(2+) binding. E217 is a catalytic residue. The Zn(2+) site is built by H220 and H226. Hemopexin repeat units lie at residues 276-325 (PHAC…WPSL), 326-371 (PADL…GFPR), 373-421 (VKKI…FPGI), and 422-465 (GLRV…WFQC). A disulfide bridge links C279 with C465. D286 is a Ca(2+) binding site. The Ca(2+) site is built by D377 and D426. A required for retention in the endoplasmic reticulum region spans residues 466-512 (KEPLNSSLDFHFNQEKAYSGEVETLHHQSLSLLIFGIVHLLNKICSY).

It belongs to the peptidase M10A family. Ca(2+) serves as cofactor. The cofactor is Zn(2+). In terms of processing, N-glycosylated.

It localises to the endoplasmic reticulum. Matrix metalloproteinases degrade protein components of the extracellular matrix such as fibronectin, laminin, gelatins and/or collagens. This is Matrix metalloproteinase-27 (MMP27) from Tupaia belangeri (Common tree shrew).